We begin with the raw amino-acid sequence, 662 residues long: Probable conjugal transfer protein TrbE part 2 (662 aa).

Residue 307–314 (GPTGSGKS) coordinates ATP.

It belongs to the TrbE/VirB4 family.

The sequence is that of Probable conjugal transfer protein TrbE part 2 (trbEB) from Sinorhizobium fredii (strain NBRC 101917 / NGR234).